Reading from the N-terminus, the 127-residue chain is Large ribosomal subunit protein bL20 (127 aa).

It belongs to the bacterial ribosomal protein bL20 family.

Functionally, binds directly to 23S ribosomal RNA and is necessary for the in vitro assembly process of the 50S ribosomal subunit. It is not involved in the protein synthesizing functions of that subunit. The sequence is that of Large ribosomal subunit protein bL20 from Corynebacterium urealyticum (strain ATCC 43042 / DSM 7109).